A 427-amino-acid chain; its full sequence is Glutamate-1-semialdehyde 2,1-aminomutase (427 aa).

K265 carries the post-translational modification N6-(pyridoxal phosphate)lysine.

This sequence belongs to the class-III pyridoxal-phosphate-dependent aminotransferase family. HemL subfamily. In terms of assembly, homodimer. The cofactor is pyridoxal 5'-phosphate.

Its subcellular location is the cytoplasm. The enzyme catalyses (S)-4-amino-5-oxopentanoate = 5-aminolevulinate. It functions in the pathway porphyrin-containing compound metabolism; protoporphyrin-IX biosynthesis; 5-aminolevulinate from L-glutamyl-tRNA(Glu): step 2/2. The sequence is that of Glutamate-1-semialdehyde 2,1-aminomutase from Marinomonas sp. (strain MWYL1).